We begin with the raw amino-acid sequence, 317 residues long: Transaldolase (317 aa).

The active-site Schiff-base intermediate with substrate is Lys132.

It belongs to the transaldolase family. Type 1 subfamily. As to quaternary structure, homodimer.

The protein localises to the cytoplasm. It carries out the reaction D-sedoheptulose 7-phosphate + D-glyceraldehyde 3-phosphate = D-erythrose 4-phosphate + beta-D-fructose 6-phosphate. Its pathway is carbohydrate degradation; pentose phosphate pathway; D-glyceraldehyde 3-phosphate and beta-D-fructose 6-phosphate from D-ribose 5-phosphate and D-xylulose 5-phosphate (non-oxidative stage): step 2/3. Functionally, transaldolase is important for the balance of metabolites in the pentose-phosphate pathway. This chain is Transaldolase (talB), found in Escherichia coli O104:H4 (strain 2009EL-2071).